The chain runs to 164 residues: Cytochrome c-type biogenesis protein CcmE (164 aa).

The Cytoplasmic segment spans residues 1 to 7; that stretch reads MTRKQRR. A helical; Signal-anchor for type II membrane protein transmembrane segment spans residues 8–28; it reads LLMIGGAGVVLVVAVGLVLNA. The Periplasmic segment spans residues 29–164; that stretch reads MRGSIVFFST…ASADAAGPSR (136 aa). The heme site is built by histidine 122 and tyrosine 126. Positions 137-149 are enriched in basic and acidic residues; it reads KQGHWKDDYEKKP. The tract at residues 137–164 is disordered; sequence KQGHWKDDYEKKPPGAPGASADAAGPSR. Over residues 153–164 the composition is skewed to low complexity; sequence PGASADAAGPSR.

The protein belongs to the CcmE/CycJ family.

The protein localises to the cell inner membrane. Heme chaperone required for the biogenesis of c-type cytochromes. Transiently binds heme delivered by CcmC and transfers the heme to apo-cytochromes in a process facilitated by CcmF and CcmH. The protein is Cytochrome c-type biogenesis protein CcmE of Rhodopseudomonas palustris (strain BisB5).